The sequence spans 48 residues: ATP synthase protein 8 (48 aa).

Residues 12–32 (QLTYGLLLITVLLILFSQFFL) form a helical membrane-spanning segment.

It belongs to the ATPase protein 8 family. In terms of assembly, F-type ATPases have 2 components, CF(1) - the catalytic core - and CF(0) - the membrane proton channel.

It is found in the mitochondrion membrane. Mitochondrial membrane ATP synthase (F(1)F(0) ATP synthase or Complex V) produces ATP from ADP in the presence of a proton gradient across the membrane which is generated by electron transport complexes of the respiratory chain. F-type ATPases consist of two structural domains, F(1) - containing the extramembraneous catalytic core and F(0) - containing the membrane proton channel, linked together by a central stalk and a peripheral stalk. During catalysis, ATP synthesis in the catalytic domain of F(1) is coupled via a rotary mechanism of the central stalk subunits to proton translocation. Part of the complex F(0) domain. Minor subunit located with subunit a in the membrane. The chain is ATP synthase protein 8 (ATP8) from Candida glabrata (strain ATCC 2001 / BCRC 20586 / JCM 3761 / NBRC 0622 / NRRL Y-65 / CBS 138) (Yeast).